The following is a 149-amino-acid chain: Cytochrome c-555 (149 aa).

The first 20 residues, 1–20 (MKRTMIVVTTLLLGAGAVMA), serve as a signal peptide directing secretion. The heme c site is built by Met32, Cys137, Cys140, and His141.

In terms of assembly, monomer. Binds 1 heme c group covalently per subunit.

The protein localises to the periplasm. In terms of biological role, low-spin monoheme cytochrome. The polypeptide is Cytochrome c-555 (cycC) (Bradyrhizobium diazoefficiens (strain JCM 10833 / BCRC 13528 / IAM 13628 / NBRC 14792 / USDA 110)).